A 306-amino-acid chain; its full sequence is Heme A synthase (306 aa).

The Cytoplasmic segment spans residues 1–5 (MKALR). Residues 6–26 (AVSLANTAVMLLAVLWGAWVT) form a helical membrane-spanning segment. Over 27-56 (SSDSGDGCGASWPLCKGTFMPDWDYAAIVE) the chain is Extracellular. The cysteines at positions 34 and 41 are disulfide-linked. Residue Glu-56 is part of the active site. A helical membrane pass occupies residues 57 to 77 (FGHRVVSALAGLLSVAVLVWV). His-59 contacts heme o. At 78-89 (ARVRPSETRLKR) the chain is on the cytoplasmic side. A helical transmembrane segment spans residues 90-110 (LAFGTFFFVVLQGGLGAAAVL). The Extracellular portion of the chain corresponds to 111–116 (RPQPDL). A helical membrane pass occupies residues 117-137 (VMALHFGFSLLCFTFALLVTV). His-121 contributes to the heme o binding site. The Cytoplasmic portion of the chain corresponds to 138–164 (ALGQGERAAFQRPDVSAQPVAPGLRTQ). A helical membrane pass occupies residues 165-185 (IWGLAVYTYLVVYLGAYVRHL). Residues 186–206 (GASMACTGWPLCNGELIPPLY) are Extracellular-facing. A disulfide bond links Cys-191 and Cys-197. The helical transmembrane segment at 207-227 (GPVGANFAHRLGAALAVVLVL) threads the bilayer. His-215 is a heme b binding site. Residues 228 to 247 (RLWWTARRLTERDDLRRGAA) are Cytoplasmic-facing. Residues 248 to 268 (WALALMAAQVASGALFPLGYL) traverse the membrane as a helical segment. The Extracellular segment spans residues 269–277 (NLLTQLLHT). His-276 contributes to the heme b binding site. The helical transmembrane segment at 278 to 298 (GLITGFWGVLSYLCYLTLPVG) threads the bilayer. The Cytoplasmic segment spans residues 299–306 (RETVAVSA).

The protein belongs to the COX15/CtaA family. Type 1 subfamily. In terms of assembly, interacts with CtaB. Heme b serves as cofactor.

It localises to the cell membrane. The enzyme catalyses Fe(II)-heme o + 2 A + H2O = Fe(II)-heme a + 2 AH2. It participates in porphyrin-containing compound metabolism; heme A biosynthesis; heme A from heme O: step 1/1. In terms of biological role, catalyzes the conversion of heme O to heme A by two successive hydroxylations of the methyl group at C8. The first hydroxylation forms heme I, the second hydroxylation results in an unstable dihydroxymethyl group, which spontaneously dehydrates, resulting in the formyl group of heme A. The protein is Heme A synthase of Symbiobacterium thermophilum (strain DSM 24528 / JCM 14929 / IAM 14863 / T).